A 201-amino-acid chain; its full sequence is Recombination protein RecR (201 aa).

The C4-type zinc finger occupies 57–72; sequence CADCRTFTEQEVCNIC. One can recognise a Toprim domain in the interval 81–176; it reads GQICVVESPA…EASRIAHGVP (96 aa).

This sequence belongs to the RecR family.

Its function is as follows. May play a role in DNA repair. It seems to be involved in an RecBC-independent recombinational process of DNA repair. It may act with RecF and RecO. The chain is Recombination protein RecR from Escherichia coli O6:K15:H31 (strain 536 / UPEC).